Reading from the N-terminus, the 98-residue chain is Small ribosomal subunit protein uS17B (98 aa).

The protein belongs to the universal ribosomal protein uS17 family. Part of the 30S ribosomal subunit.

Functionally, one of the primary rRNA binding proteins, it binds specifically to the 5'-end of 16S ribosomal RNA. The chain is Small ribosomal subunit protein uS17B from Bacteroides thetaiotaomicron (strain ATCC 29148 / DSM 2079 / JCM 5827 / CCUG 10774 / NCTC 10582 / VPI-5482 / E50).